The primary structure comprises 239 residues: Probable transcriptional regulatory protein ABO_1803 (239 aa).

This sequence belongs to the TACO1 family.

It localises to the cytoplasm. The polypeptide is Probable transcriptional regulatory protein ABO_1803 (Alcanivorax borkumensis (strain ATCC 700651 / DSM 11573 / NCIMB 13689 / SK2)).